Consider the following 503-residue polypeptide: Transcription termination/antitermination protein NusA (503 aa).

Positions 139–203 (GEIINGIVKR…KGPQIFLSRV (65 aa)) constitute an S1 motif domain. One can recognise a KH domain in the interval 308 to 378 (RHKVEVVVSQ…LDVEEVIGQL (71 aa)).

The protein belongs to the NusA family. In terms of assembly, monomer. Binds directly to the core enzyme of the DNA-dependent RNA polymerase and to nascent RNA.

Its subcellular location is the cytoplasm. Its function is as follows. Participates in both transcription termination and antitermination. This chain is Transcription termination/antitermination protein NusA, found in Rickettsia conorii (strain ATCC VR-613 / Malish 7).